The chain runs to 244 residues: High affinity immunoglobulin epsilon receptor subunit beta (244 aa).

Residues 1–59 (MDTESNRRANLALPQEPSSVPAFEVLEISPQEVSSGRLLKSASSPPLHTWLTVLKKEQE) are Cytoplasmic-facing. Residues 60 to 79 (FLGVTQILTAMICLCFGTVV) form a helical membrane-spanning segment. Residues 80–97 (CSVLDISHIEGDIFSSFK) lie on the Extracellular side of the membrane. The chain crosses the membrane as a helical span at residues 98–117 (AGYPFWGAIFFSISGMLSII). Residues 118 to 130 (SERRNATYLVRGS) are Cytoplasmic-facing. Residues 131–150 (LGANTASSIAGGTGITILII) form a helical membrane-spanning segment. Residues 151–180 (NLKKSLAYIHIHSCQKFFETKCFMASFSTE) are Extracellular-facing. Residues 181-200 (IVVMMLFLTILGLGSAVSLT) traverse the membrane as a helical segment. Residues 201–244 (ICGAGEELKGNKVPEDRVYEELNIYSATYSELEDPGEMSPPIDL) lie on the Cytoplasmic side of the membrane. Phosphotyrosine is present on residues Tyr219 and Tyr225. Ser226 bears the Phosphoserine mark. Tyr229 carries the post-translational modification Phosphotyrosine.

This sequence belongs to the MS4A family. Tetramer of an alpha chain, a beta chain, and two disulfide linked gamma chains. Binds LILRB1. Interacts with FGR, FES/FPS and LYN. Phosphorylated on tyrosine residues by LYN. As to expression, found on the surface of mast cells and basophils.

The protein resides in the membrane. In terms of biological role, high affinity receptor that binds to the Fc region of immunoglobulins epsilon. Aggregation of FCER1 by multivalent antigens is required for the full mast cell response, including the release of preformed mediators (such as histamine) by degranulation and de novo production of lipid mediators and cytokines. Also mediates the secretion of important lymphokines. Binding of allergen to receptor-bound IgE leads to cell activation and the release of mediators responsible for the manifestations of allergy. The polypeptide is High affinity immunoglobulin epsilon receptor subunit beta (MS4A2) (Homo sapiens (Human)).